Consider the following 228-residue polypeptide: Heat shock 70-related protein 4 (228 aa).

The interval 57–80 is disordered; sequence RWHEPPGNTVFDEAHDRPQVRRPD. The span at 68-80 shows a compositional bias: basic and acidic residues; sequence DEAHDRPQVRRPD.

This sequence belongs to the heat shock protein 70 family.

This Leishmania major protein is Heat shock 70-related protein 4 (HSP70.4).